An 827-amino-acid polypeptide reads, in one-letter code: DNA ligase (827 aa).

NAD(+) is bound by residues 45–49, 94–95, and E128; these read DAAYD and SL. The active-site N6-AMP-lysine intermediate is the K130. NAD(+)-binding residues include R151, E188, K304, and K328. The Zn(2+) site is built by C451, C454, C475, and C481. One can recognise a BRCT domain in the interval 748-827; sequence AAAAAFSGRT…AEWLAMVEAA (80 aa).

It belongs to the NAD-dependent DNA ligase family. LigA subfamily. It depends on Mg(2+) as a cofactor. Mn(2+) is required as a cofactor.

It carries out the reaction NAD(+) + (deoxyribonucleotide)n-3'-hydroxyl + 5'-phospho-(deoxyribonucleotide)m = (deoxyribonucleotide)n+m + AMP + beta-nicotinamide D-nucleotide.. DNA ligase that catalyzes the formation of phosphodiester linkages between 5'-phosphoryl and 3'-hydroxyl groups in double-stranded DNA using NAD as a coenzyme and as the energy source for the reaction. It is essential for DNA replication and repair of damaged DNA. The chain is DNA ligase from Methylobacterium sp. (strain 4-46).